Consider the following 356-residue polypeptide: Heparan sulfate 2-O-sulfotransferase 1 (356 aa).

At 1 to 11 (MGLLRIMMPPK) the chain is on the cytoplasmic side. The chain crosses the membrane as a helical; Signal-anchor for type II membrane protein span at residues 12 to 28 (LQLLAVVAFAVAMLFLE). Residues 24–51 (MLFLENQIQKLEESRSKLERAIARHEVR) adopt a coiled-coil conformation. At 29–356 (NQIQKLEESR…FYEKIYPKSN (328 aa)) the chain is on the lumenal side. Residues lysine 83, threonine 84, alanine 85, serine 86, threonine 87, and serine 88 each coordinate adenosine 3',5'-bisphosphate. Asparagine 108 and asparagine 127 each carry an N-linked (GlcNAc...) asparagine glycan. Active-site residues include histidine 140 and histidine 142. Residues arginine 164 and serine 172 each contribute to the adenosine 3',5'-bisphosphate site. Intrachain disulfides connect cysteine 201–cysteine 209 and cysteine 222–cysteine 228. Residues tyrosine 279, serine 285, threonine 290, and lysine 293 each contribute to the adenosine 3',5'-bisphosphate site.

It belongs to the sulfotransferase 3 family. Homotrimer. Interacts with the C5-epimerase GLCE. In terms of processing, N-glycosylated.

The protein resides in the golgi apparatus membrane. Catalyzes the transfer of a sulfo group from 3'-phospho-5'-adenylyl sulfate (PAPS) to the 2-OH position of iduronic acid (IdoA) or glucuronic acid (GlcA) within the heparan sulfate (HS) chain and participates in HS biosynthesis. Required for metanephric development of kidney formation, suggesting that 2-O-sulfation within HS is essential for signaling between ureteric bud and metanephric mesenchyme. The polypeptide is Heparan sulfate 2-O-sulfotransferase 1 (Homo sapiens (Human)).